The following is a 284-amino-acid chain: NADH-cytochrome b5 reductase 1 (284 aa).

The helical transmembrane segment at 8–28 (PLFVFSTIAIIISTFVIFYFV) threads the bilayer. In terms of domain architecture, FAD-binding FR-type spans 41–144 (DTFQKFPLIE…RGPKGFFTYT (104 aa)). FAD is bound by residues 124–139 (DSKK…GPKG) and 150–182 (SFGM…KISL).

This sequence belongs to the flavoprotein pyridine nucleotide cytochrome reductase family. As to quaternary structure, monomer. Component of the 2-(3-amino-3-carboxypropyl)histidine synthase complex composed of DPH1, DPH2, DPH3 and a NADH-dependent reductase, predominantly CBR1. FAD serves as cofactor.

The protein localises to the mitochondrion outer membrane. It carries out the reaction 2 Fe(III)-[cytochrome b5] + NADH = 2 Fe(II)-[cytochrome b5] + NAD(+) + H(+). The catalysed reaction is 2 Fe(3+)-[Dph3] + NADH = 2 Fe(2+)-[Dph3] + NAD(+) + H(+). The protein operates within protein modification; peptidyl-diphthamide biosynthesis. NADH-dependent reductase for DPH3 and cytochrome b5. Required for the first step of diphthamide biosynthesis, a post-translational modification of histidine which occurs in elongation factor 2. DPH1 and DPH2 transfer a 3-amino-3-carboxypropyl (ACP) group from S-adenosyl-L-methionine (SAM) to a histidine residue, the reaction is assisted by a reduction system comprising DPH3 and a NADH-dependent reductase, predominantly CBR1. By reducing DPH3, also involved in the formation of the tRNA wobble base modification mcm5s 2U (5-methoxycarbonylmethyl-2-thiouridine), mediated by the elongator complex. The cytochrome b5/NADH cytochrome b5 reductase electron transfer system supports the catalytic activity of several sterol biosynthetic enzymes. The chain is NADH-cytochrome b5 reductase 1 (CBR1) from Scheffersomyces stipitis (strain ATCC 58785 / CBS 6054 / NBRC 10063 / NRRL Y-11545) (Yeast).